A 391-amino-acid polypeptide reads, in one-letter code: 1-deoxy-D-xylulose 5-phosphate reductoisomerase (391 aa).

NADPH is bound by residues Thr-11, Gly-12, Ser-13, Ile-14, Gly-37, Asn-39, and Asn-125. Residue Lys-126 participates in 1-deoxy-D-xylulose 5-phosphate binding. Glu-127 is a binding site for NADPH. Mn(2+) is bound at residue Asp-151. 1-deoxy-D-xylulose 5-phosphate is bound by residues Ser-152, Glu-153, Ser-176, and His-199. Glu-153 lines the Mn(2+) pocket. Position 205 (Gly-205) interacts with NADPH. Positions 212, 217, 218, and 221 each coordinate 1-deoxy-D-xylulose 5-phosphate. Glu-221 contacts Mn(2+).

The protein belongs to the DXR family. It depends on Mg(2+) as a cofactor. The cofactor is Mn(2+).

The enzyme catalyses 2-C-methyl-D-erythritol 4-phosphate + NADP(+) = 1-deoxy-D-xylulose 5-phosphate + NADPH + H(+). It functions in the pathway isoprenoid biosynthesis; isopentenyl diphosphate biosynthesis via DXP pathway; isopentenyl diphosphate from 1-deoxy-D-xylulose 5-phosphate: step 1/6. Functionally, catalyzes the NADPH-dependent rearrangement and reduction of 1-deoxy-D-xylulose-5-phosphate (DXP) to 2-C-methyl-D-erythritol 4-phosphate (MEP). This Heliobacterium modesticaldum (strain ATCC 51547 / Ice1) protein is 1-deoxy-D-xylulose 5-phosphate reductoisomerase.